The chain runs to 120 residues: uncharacterized protein (120 aa).

3 consecutive transmembrane segments (helical) span residues Phe20–Leu39, Gly52–Ile71, and Ile86–Gly108.

The protein resides in the cell membrane. This is an uncharacterized protein from Pasteurella multocida (strain Pm70).